Reading from the N-terminus, the 225-residue chain is uncharacterized protein (225 aa).

Residues 2–22 (TIFYLVFIAVIIIIILYVLYL) traverse the membrane as a helical segment. N-linked (GlcNAc...) asparagine; by host glycosylation is present at Asn73. Residues 114–146 (DYEDNYFNSNWNLKQLKNQLENLLREKNYKMVL) are a coiled coil. The N-linked (GlcNAc...) asparagine; by host glycan is linked to Asn222.

It is found in the membrane. This is an uncharacterized protein from Acanthamoeba polyphaga (Amoeba).